We begin with the raw amino-acid sequence, 910 residues long: Protein translocase subunit SecA (910 aa).

Residues Gln89, 107 to 111, and Asp502 contribute to the ATP site; that span reads GEGKT. Zn(2+)-binding residues include Cys894, Cys896, Cys905, and His906.

This sequence belongs to the SecA family. In terms of assembly, monomer and homodimer. Part of the essential Sec protein translocation apparatus which comprises SecA, SecYEG and auxiliary proteins SecDF-YajC and YidC. Requires Zn(2+) as cofactor.

Its subcellular location is the cell inner membrane. It is found in the cytoplasm. The enzyme catalyses ATP + H2O + cellular proteinSide 1 = ADP + phosphate + cellular proteinSide 2.. Functionally, part of the Sec protein translocase complex. Interacts with the SecYEG preprotein conducting channel. Has a central role in coupling the hydrolysis of ATP to the transfer of proteins into and across the cell membrane, serving both as a receptor for the preprotein-SecB complex and as an ATP-driven molecular motor driving the stepwise translocation of polypeptide chains across the membrane. The chain is Protein translocase subunit SecA from Mesorhizobium japonicum (strain LMG 29417 / CECT 9101 / MAFF 303099) (Mesorhizobium loti (strain MAFF 303099)).